A 378-amino-acid polypeptide reads, in one-letter code: Erythronate-4-phosphate dehydrogenase (378 aa).

Residues Ser45 and Thr66 each coordinate substrate. NAD(+) contacts are provided by Asp146 and Thr175. The active site involves Arg208. Asp232 lines the NAD(+) pocket. Glu237 is a catalytic residue. The Proton donor role is filled by His254. NAD(+) is bound at residue Gly257. Tyr258 contributes to the substrate binding site.

This sequence belongs to the D-isomer specific 2-hydroxyacid dehydrogenase family. PdxB subfamily. Homodimer.

It is found in the cytoplasm. It catalyses the reaction 4-phospho-D-erythronate + NAD(+) = (R)-3-hydroxy-2-oxo-4-phosphooxybutanoate + NADH + H(+). The protein operates within cofactor biosynthesis; pyridoxine 5'-phosphate biosynthesis; pyridoxine 5'-phosphate from D-erythrose 4-phosphate: step 2/5. Catalyzes the oxidation of erythronate-4-phosphate to 3-hydroxy-2-oxo-4-phosphonooxybutanoate. The protein is Erythronate-4-phosphate dehydrogenase of Escherichia coli O8 (strain IAI1).